A 662-amino-acid chain; its full sequence is uncharacterized protein (662 aa).

Disordered regions lie at residues 1 to 94, 107 to 237, 288 to 328, 406 to 440, and 506 to 580; these read MSQR…NENN, DHNN…VKYH, ETTS…TPSA, QSSFLNKPTNNTETPTTTTTTTTTTTTTPSQPIQM, and QNSI…MVSP. Low complexity predominate over residues 25–49; the sequence is TTTTTPTPTTTTTTTSSLSSSTSST. Basic and acidic residues predominate over residues 77 to 87; the sequence is DNIKLDNEKTF. Over residues 109 to 161 the composition is skewed to low complexity; the sequence is NNNNNNNNNNNNNNNNNNNNNNNNNNNNNNNNNNNNNNNNNNNNNNNNNNNNN. The segment covering 162–176 has biased composition (polar residues); the sequence is DTQKGTNKNENNCTD. Residues 183 to 196 show a composition bias toward low complexity; it reads STSTTSSSETGSST. Residues 203 to 212 show a composition bias toward polar residues; sequence KTPQSCLKKS. Positions 213 to 224 are enriched in low complexity; the sequence is NNNNNDNNNNNN. Positions 226–235 are enriched in basic residues; that stretch reads KTPRSTKKVK. Composition is skewed to low complexity over residues 288-308, 413-434, 515-526, and 535-575; these read ETTSVTSTTSTATTTTTTPIP, PTNNTETPTTTTTTTTTTTTTP, PTKSSSSTSIQQ, and NINN…NNNN.

This is an uncharacterized protein from Dictyostelium discoideum (Social amoeba).